The sequence spans 394 residues: Acryloyl-CoA reductase (NADH) (394 aa).

Residues 135–144 (FALTEPNAGS) and 170–172 (FIS) each bind FAD. Ser-144 contributes to the substrate binding site. Substrate is bound at residue 254–257 (DGAR). Residues Arg-282, Gln-293, and 350–354 (QIHGG) contribute to the FAD site. The Proton acceptor role is filled by Glu-377. Gly-378 lines the substrate pocket. An FAD-binding site is contributed by 379–381 (TSE).

As to quaternary structure, heterohexadecamer; tetramer of tetramers. Each tetramer is composed of 2 alpha (AcrC), a beta (AcrA) and a gamma (AcrB) subunit. Requires FAD as cofactor.

It is found in the cytoplasm. The catalysed reaction is propanoyl-CoA + NAD(+) = acryloyl-CoA + NADH + H(+). Functionally, probable catalytic subunit of the acryloyl-CoA reductase complex involved in the pathway of L-alanine fermentation. Catalyzes the irreversible NADH-dependent formation of propionyl-CoA from acryloyl-CoA. It can also use 3-buten-2-one as substrate. The sequence is that of Acryloyl-CoA reductase (NADH) (acrC) from Anaerotignum propionicum (Clostridium propionicum).